A 171-amino-acid chain; its full sequence is 3-hydroxydecanoyl-[acyl-carrier-protein] dehydratase (171 aa).

The active site involves His70.

This sequence belongs to the thioester dehydratase family. FabA subfamily. Homodimer.

It localises to the cytoplasm. The enzyme catalyses a (3R)-hydroxyacyl-[ACP] = a (2E)-enoyl-[ACP] + H2O. It carries out the reaction (3R)-hydroxydecanoyl-[ACP] = (2E)-decenoyl-[ACP] + H2O. The catalysed reaction is (2E)-decenoyl-[ACP] = (3Z)-decenoyl-[ACP]. It participates in lipid metabolism; fatty acid biosynthesis. Functionally, necessary for the introduction of cis unsaturation into fatty acids. Catalyzes the dehydration of (3R)-3-hydroxydecanoyl-ACP to E-(2)-decenoyl-ACP and then its isomerization to Z-(3)-decenoyl-ACP. Can catalyze the dehydratase reaction for beta-hydroxyacyl-ACPs with saturated chain lengths up to 16:0, being most active on intermediate chain length. The chain is 3-hydroxydecanoyl-[acyl-carrier-protein] dehydratase from Shewanella loihica (strain ATCC BAA-1088 / PV-4).